The sequence spans 308 residues: Spermidine synthase 1 (308 aa).

The 238-residue stretch at 17-254 folds into the PABS domain; sequence PGWFSEISPL…GVIGFMLCST (238 aa). Glutamine 48 lines the S-adenosyl 3-(methylsulfanyl)propylamine pocket. Tyrosine 78 lines the putrescine pocket. S-adenosyl 3-(methylsulfanyl)propylamine is bound by residues glutamine 79, aspartate 103, glutamate 123, 154-155, and aspartate 173; that span reads DG. The Proton acceptor role is filled by aspartate 173. Residues 173-176 and tyrosine 242 contribute to the putrescine site; that span reads DSSD.

The protein belongs to the spermidine/spermine synthase family.

The catalysed reaction is S-adenosyl 3-(methylsulfanyl)propylamine + putrescine = S-methyl-5'-thioadenosine + spermidine + H(+). Its pathway is amine and polyamine biosynthesis; spermidine biosynthesis; spermidine from putrescine: step 1/1. This Datura stramonium (Jimsonweed) protein is Spermidine synthase 1.